The following is a 616-amino-acid chain: Proline--tRNA ligase (616 aa).

Belongs to the class-II aminoacyl-tRNA synthetase family. ProS type 1 subfamily. In terms of assembly, homodimer.

The protein localises to the cytoplasm. It catalyses the reaction tRNA(Pro) + L-proline + ATP = L-prolyl-tRNA(Pro) + AMP + diphosphate. Catalyzes the attachment of proline to tRNA(Pro) in a two-step reaction: proline is first activated by ATP to form Pro-AMP and then transferred to the acceptor end of tRNA(Pro). As ProRS can inadvertently accommodate and process non-cognate amino acids such as alanine and cysteine, to avoid such errors it has two additional distinct editing activities against alanine. One activity is designated as 'pretransfer' editing and involves the tRNA(Pro)-independent hydrolysis of activated Ala-AMP. The other activity is designated 'posttransfer' editing and involves deacylation of mischarged Ala-tRNA(Pro). The misacylated Cys-tRNA(Pro) is not edited by ProRS. The sequence is that of Proline--tRNA ligase from Streptococcus sanguinis (strain SK36).